The chain runs to 99 residues: Acylphosphatase-1 (99 aa).

N-acetylalanine is present on Ala2. The Acylphosphatase-like domain occupies Ser9–Lys99. Residues Arg24 and Asn42 contribute to the active site.

Belongs to the acylphosphatase family.

The enzyme catalyses an acyl phosphate + H2O = a carboxylate + phosphate + H(+). The sequence is that of Acylphosphatase-1 (Acyp1) from Mus musculus (Mouse).